Here is a 105-residue protein sequence, read N- to C-terminus: Vacuolar ATPase assembly integral membrane protein VMA21 homolog (105 aa).

Positions 1-26 are disordered; sequence MSTKNKKAAGGNGGAPKQTRQQSHDS. The Cytoplasmic segment spans residues 1–36; sequence MSTKNKKAAGGNGGAPKQTRQQSHDSQDYSSFKTVL. Residues 37-57 form a helical membrane-spanning segment; the sequence is FYCMLIVFLPVLTFFVLKGFV. Topologically, residues 58-68 are lumenal; it reads LDQFLNISEVK. The chain crosses the membrane as a helical span at residues 69-89; that stretch reads VNIASAVGAVVALHIALGLYI. The Cytoplasmic segment spans residues 90–105; that stretch reads YRAYFGAPGSKGSKTD.

It belongs to the VMA21 family.

It is found in the endoplasmic reticulum membrane. It localises to the endoplasmic reticulum-Golgi intermediate compartment membrane. Its subcellular location is the cytoplasmic vesicle. The protein resides in the COPII-coated vesicle membrane. Required for the assembly of the V0 complex of the vacuolar ATPase (V-ATPase) in the endoplasmic reticulum. This is Vacuolar ATPase assembly integral membrane protein VMA21 homolog from Drosophila sechellia (Fruit fly).